The sequence spans 319 residues: Selection and upkeep of intraepithelial T-cells protein 9 (319 aa).

Residues 1 to 26 (MESSASCLPGFFMSFLLLQNTVLTQA) form the signal peptide. An Ig-like V-type domain is found at 27 to 117 (MRSDIKINIQ…TNQEKKRSIV (91 aa)). The Extracellular segment spans residues 27–139 (MRSDIKINIQ…LMSNKFSCPS (113 aa)). Cys-47 and Cys-101 are joined by a disulfide. Asn-105 carries N-linked (GlcNAc...) asparagine glycosylation. The chain crosses the membrane as a helical span at residues 140 to 160 (IYLITIIFLNFLRGILVFCCL). Residues 161–183 (RRKPVCFRNLMSTVMEALYSKMG) are Cytoplasmic-facing. A helical transmembrane segment spans residues 184-204 (VCCLLIWECLLLVLYIAFLPI). Over 205 to 228 (YVSFRSRAFLLDDTYPLYTNWLWN) the chain is Extracellular. The chain crosses the membrane as a helical span at residues 229–249 (ICIILTVIMVLFPGLILCLLW). Residues 250–319 (TLNCYGQVSS…DDTASTLFIS (70 aa)) lie on the Cytoplasmic side of the membrane.

The protein belongs to the SKINT family. In terms of tissue distribution, expressed in skin, thymus and testis.

The protein localises to the membrane. Functionally, may act by engaging a cell surface molecule on immature T-cells in the embryonic thymus. The chain is Selection and upkeep of intraepithelial T-cells protein 9 (Skint9) from Mus musculus (Mouse).